Reading from the N-terminus, the 233-residue chain is Large ribosomal subunit protein uL1 (233 aa).

Belongs to the universal ribosomal protein uL1 family. In terms of assembly, part of the 50S ribosomal subunit.

Binds directly to 23S rRNA. The L1 stalk is quite mobile in the ribosome, and is involved in E site tRNA release. In terms of biological role, protein L1 is also a translational repressor protein, it controls the translation of the L11 operon by binding to its mRNA. The polypeptide is Large ribosomal subunit protein uL1 (Zymomonas mobilis subsp. mobilis (strain ATCC 31821 / ZM4 / CP4)).